A 200-amino-acid chain; its full sequence is MSAISAASVKALRDKTGAGMMDCKKALGECNGDEEKAVAWLREKGLSKAQKRAGRATSEGVIGSYIHSNGKLGVMVEIKCETDFVARSERFLEFAKNVAMQIAAANPVCVTPEEVPADLLAKEREIFKNQAMEEGKPEAIAEKIVDGRVKKLYKEICLLEQPFIKDDKVTIKDLMNELVGVIGENVQIGRFSRMALGEDA.

Residues 82 to 85 form an involved in Mg(2+) ion dislocation from EF-Tu region; the sequence is TDFV.

It belongs to the EF-Ts family.

The protein resides in the cytoplasm. Its function is as follows. Associates with the EF-Tu.GDP complex and induces the exchange of GDP to GTP. It remains bound to the aminoacyl-tRNA.EF-Tu.GTP complex up to the GTP hydrolysis stage on the ribosome. The polypeptide is Elongation factor Ts (Solidesulfovibrio magneticus (strain ATCC 700980 / DSM 13731 / RS-1) (Desulfovibrio magneticus)).